The chain runs to 341 residues: Thymidine kinase (341 aa).

Gly-19 to Thr-26 is an ATP binding site. Glu-48 acts as the Proton acceptor in catalysis. Positions 66 and 90 each coordinate substrate. Arg-183 is an ATP binding site. Arg-189 provides a ligand contact to substrate.

It belongs to the herpesviridae thymidine kinase family. As to quaternary structure, homodimer.

The enzyme catalyses thymidine + ATP = dTMP + ADP + H(+). Catalyzes the transfer of the gamma-phospho group of ATP to thymidine to generate dTMP in the salvage pathway of pyrimidine synthesis. The dTMP serves as a substrate for DNA polymerase during viral DNA replication. Allows the virus to be reactivated and to grow in non-proliferative cells lacking a high concentration of phosphorylated nucleic acid precursors. This is Thymidine kinase from Varicella-zoster virus (strain Oka vaccine) (HHV-3).